Consider the following 232-residue polypeptide: Ribose-5-phosphate isomerase A (232 aa).

Residues 28-31 (TGST), 83-86 (DGAD), and 96-99 (KGGG) contribute to the substrate site. Catalysis depends on Glu-105, which acts as the Proton acceptor. Residue Lys-123 coordinates substrate.

It belongs to the ribose 5-phosphate isomerase family. In terms of assembly, homodimer.

It catalyses the reaction aldehydo-D-ribose 5-phosphate = D-ribulose 5-phosphate. It functions in the pathway carbohydrate degradation; pentose phosphate pathway; D-ribose 5-phosphate from D-ribulose 5-phosphate (non-oxidative stage): step 1/1. In terms of biological role, catalyzes the reversible conversion of ribose-5-phosphate to ribulose 5-phosphate. The chain is Ribose-5-phosphate isomerase A from Rhodopseudomonas palustris (strain BisB18).